The chain runs to 334 residues: Testis-specific Y-encoded protein 1 (334 aa).

Phosphoserine is present on Ser-4. 2 disordered regions span residues 27-46 (LEGE…PAGD) and 96-146 (NEGE…AERR). Composition is skewed to basic and acidic residues over residues 96 to 108 (NEGE…KQEG) and 115 to 128 (ELEK…DSKD).

The protein belongs to the nucleosome assembly protein (NAP) family. In terms of processing, phosphorylated. As to expression, testis.

The protein localises to the cytoplasm. It localises to the nucleus. Its function is as follows. May be involved in sperm differentiation and proliferation. This Rattus norvegicus (Rat) protein is Testis-specific Y-encoded protein 1 (Tspy1).